Here is a 250-residue protein sequence, read N- to C-terminus: Mycofactocin precursor peptide peptidase (250 aa).

Positions 38, 40, 49, 127, and 166 each coordinate a divalent metal cation.

This sequence belongs to the creatininase superfamily. As to quaternary structure, homooctamer. It depends on Fe(2+) as a cofactor. Requires Zn(2+) as cofactor.

It catalyses the reaction [mycofactocin precursor peptide]-C-terminal glycyl-N-{5-[(4-hydroxyphenyl)methyl]-4,4-dimethyl-2-oxopyrrolidin-3-yl}acetamide + H2O = [mycofactocin precursor peptide]-C-terminal glycine + 3-amino-5-[(4-hydroxyphenyl)methyl]-4,4-dimethyl-2-pyrrolidin-2-one. Peptidase involved in the biosynthesis of the enzyme cofactor mycofactocin (MFT). Catalyzes cleavage of the MftC-modified MftA peptide to liberate its final two residues, which consist of a cross-linked valine-decarboxylated tyrosine dipeptide (named 3-amino-5-[(4-hydroxyphenyl)methyl]-4,4-dimethyl-2-pyrrolidin-2-one or ADHP). The chain is Mycofactocin precursor peptide peptidase from Mycobacterium ulcerans (strain Agy99).